The primary structure comprises 185 residues: Photosystem I assembly protein Ycf4 (185 aa).

2 helical membrane passes run 24-44 (YIIG…SISS) and 66-86 (IIMG…WYLV).

This sequence belongs to the Ycf4 family.

The protein resides in the cellular thylakoid membrane. Functionally, seems to be required for the assembly of the photosystem I complex. The protein is Photosystem I assembly protein Ycf4 of Prochlorococcus marinus (strain AS9601).